The chain runs to 237 residues: Small ribosomal subunit protein uS17m (237 aa).

Belongs to the universal ribosomal protein uS17 family. Component of the mitochondrial small ribosomal subunit (mt-SSU). Mature yeast 74S mitochondrial ribosomes consist of a small (37S) and a large (54S) subunit. The 37S small subunit contains a 15S ribosomal RNA (15S mt-rRNA) and 34 different proteins. The 54S large subunit contains a 21S rRNA (21S mt-rRNA) and 46 different proteins.

The protein localises to the mitochondrion. Functionally, component of the mitochondrial ribosome (mitoribosome), a dedicated translation machinery responsible for the synthesis of mitochondrial genome-encoded proteins, including at least some of the essential transmembrane subunits of the mitochondrial respiratory chain. The mitoribosomes are attached to the mitochondrial inner membrane and translation products are cotranslationally integrated into the membrane. uS17m may have a meiosis-specific role as it accumulates during the middle stage of sporulation. The protein is Small ribosomal subunit protein uS17m (MRPS17) of Saccharomyces cerevisiae (strain ATCC 204508 / S288c) (Baker's yeast).